Consider the following 260-residue polypeptide: 1-(5-phosphoribosyl)-5-[(5-phosphoribosylamino)methylideneamino] imidazole-4-carboxamide isomerase (260 aa).

The active-site Proton acceptor is the Asp-8. The active-site Proton donor is the Asp-130.

The protein belongs to the HisA/HisF family.

It is found in the cytoplasm. The catalysed reaction is 1-(5-phospho-beta-D-ribosyl)-5-[(5-phospho-beta-D-ribosylamino)methylideneamino]imidazole-4-carboxamide = 5-[(5-phospho-1-deoxy-D-ribulos-1-ylimino)methylamino]-1-(5-phospho-beta-D-ribosyl)imidazole-4-carboxamide. The protein operates within amino-acid biosynthesis; L-histidine biosynthesis; L-histidine from 5-phospho-alpha-D-ribose 1-diphosphate: step 4/9. The protein is 1-(5-phosphoribosyl)-5-[(5-phosphoribosylamino)methylideneamino] imidazole-4-carboxamide isomerase of Chlorobaculum parvum (strain DSM 263 / NCIMB 8327) (Chlorobium vibrioforme subsp. thiosulfatophilum).